A 1390-amino-acid chain; its full sequence is DNA-directed RNA polymerase subunit beta'' (1390 aa).

4 residues coordinate Zn(2+): Cys-224, Cys-294, Cys-301, and Cys-304.

It belongs to the RNA polymerase beta' chain family. RpoC2 subfamily. As to quaternary structure, in plastids the minimal PEP RNA polymerase catalytic core is composed of four subunits: alpha, beta, beta', and beta''. When a (nuclear-encoded) sigma factor is associated with the core the holoenzyme is formed, which can initiate transcription. Zn(2+) is required as a cofactor.

The protein localises to the plastid. Its subcellular location is the chloroplast. The catalysed reaction is RNA(n) + a ribonucleoside 5'-triphosphate = RNA(n+1) + diphosphate. Functionally, DNA-dependent RNA polymerase catalyzes the transcription of DNA into RNA using the four ribonucleoside triphosphates as substrates. This Ceratophyllum demersum (Rigid hornwort) protein is DNA-directed RNA polymerase subunit beta''.